A 160-amino-acid polypeptide reads, in one-letter code: Small ribosomal subunit protein uS7 (160 aa).

The protein belongs to the universal ribosomal protein uS7 family. As to quaternary structure, part of the 30S ribosomal subunit. Contacts proteins S9 and S11.

Functionally, one of the primary rRNA binding proteins, it binds directly to 16S rRNA where it nucleates assembly of the head domain of the 30S subunit. Is located at the subunit interface close to the decoding center, probably blocks exit of the E-site tRNA. The protein is Small ribosomal subunit protein uS7 of Rickettsia akari (strain Hartford).